The primary structure comprises 95 residues: Small ribosomal subunit protein uS17 (95 aa).

The protein belongs to the universal ribosomal protein uS17 family. As to quaternary structure, part of the 30S ribosomal subunit.

One of the primary rRNA binding proteins, it binds specifically to the 5'-end of 16S ribosomal RNA. The protein is Small ribosomal subunit protein uS17 of Streptomyces coelicolor (strain ATCC BAA-471 / A3(2) / M145).